Consider the following 255-residue polypeptide: Type III pantothenate kinase (255 aa).

Position 7 to 14 (7 to 14) interacts with ATP; the sequence is DVGNTRLK. Substrate is bound by residues Tyr-96 and 103-106; that span reads GADR. Asp-105 acts as the Proton acceptor in catalysis. Position 133 (Thr-133) interacts with ATP. Residue Thr-183 participates in substrate binding.

It belongs to the type III pantothenate kinase family. Homodimer. NH4(+) is required as a cofactor. Requires K(+) as cofactor.

It is found in the cytoplasm. It carries out the reaction (R)-pantothenate + ATP = (R)-4'-phosphopantothenate + ADP + H(+). It participates in cofactor biosynthesis; coenzyme A biosynthesis; CoA from (R)-pantothenate: step 1/5. Its function is as follows. Catalyzes the phosphorylation of pantothenate (Pan), the first step in CoA biosynthesis. This is Type III pantothenate kinase from Albidiferax ferrireducens (strain ATCC BAA-621 / DSM 15236 / T118) (Rhodoferax ferrireducens).